We begin with the raw amino-acid sequence, 156 residues long: Cell division protein SepF (156 aa).

This sequence belongs to the SepF family. In terms of assembly, homodimer. Interacts with FtsZ.

The protein resides in the cytoplasm. Functionally, cell division protein that is part of the divisome complex and is recruited early to the Z-ring. Probably stimulates Z-ring formation, perhaps through the cross-linking of FtsZ protofilaments. Its function overlaps with FtsA. The polypeptide is Cell division protein SepF (Bacillus cytotoxicus (strain DSM 22905 / CIP 110041 / 391-98 / NVH 391-98)).